A 505-amino-acid polypeptide reads, in one-letter code: Glutamate--cysteine ligase (505 aa).

Belongs to the glutamate--cysteine ligase type 1 family. Type 1 subfamily.

The enzyme catalyses L-cysteine + L-glutamate + ATP = gamma-L-glutamyl-L-cysteine + ADP + phosphate + H(+). It participates in sulfur metabolism; glutathione biosynthesis; glutathione from L-cysteine and L-glutamate: step 1/2. This chain is Glutamate--cysteine ligase, found in Wigglesworthia glossinidia brevipalpis.